A 360-amino-acid polypeptide reads, in one-letter code: Protein Wnt-2 (360 aa).

Residues 1 to 25 form the signal peptide; it reads MNVPLGGIWLWLPLLLTWLTPEVSS. Disulfide bonds link Cys-76–Cys-87, Cys-127–Cys-135, Cys-137–Cys-157, Cys-206–Cys-220, Cys-208–Cys-215, Cys-278–Cys-309, Cys-294–Cys-304, Cys-308–Cys-348, Cys-324–Cys-339, Cys-326–Cys-336, and Cys-331–Cys-332. Ser-212 carries the O-palmitoleoyl serine; by PORCN lipid modification. N-linked (GlcNAc...) asparagine glycosylation is present at Asn-295.

Belongs to the Wnt family. In terms of processing, palmitoleoylation is required for efficient binding to frizzled receptors. Depalmitoleoylation leads to Wnt signaling pathway inhibition. In terms of tissue distribution, in embryos in the developing allantois, pericardium heart, and ventral-lateral mesoderm; in adults in lung, brain, heart and placenta.

It localises to the secreted. It is found in the extracellular space. The protein localises to the extracellular matrix. Ligand for members of the frizzled family of seven transmembrane receptors. Functions in the canonical Wnt/beta-catenin signaling pathway. Functions as a upstream regulator of FGF10 expression. Plays an important role in embryonic lung development. May contribute to embryonic brain development by regulating the proliferation of dopaminergic precursors and neurons. The protein is Protein Wnt-2 (Wnt2) of Mus musculus (Mouse).